A 207-amino-acid polypeptide reads, in one-letter code: Large ribosomal subunit protein uL4 (207 aa).

A disordered region spans residues 56 to 76 (EVRGGGRKPWRQKGTGRARAG). The segment covering 60–71 (GGRKPWRQKGTG) has biased composition (basic residues).

This sequence belongs to the universal ribosomal protein uL4 family. In terms of assembly, part of the 50S ribosomal subunit.

In terms of biological role, one of the primary rRNA binding proteins, this protein initially binds near the 5'-end of the 23S rRNA. It is important during the early stages of 50S assembly. It makes multiple contacts with different domains of the 23S rRNA in the assembled 50S subunit and ribosome. Forms part of the polypeptide exit tunnel. This Desulfitobacterium hafniense (strain Y51) protein is Large ribosomal subunit protein uL4.